Consider the following 358-residue polypeptide: Alanine racemase (358 aa).

Catalysis depends on K34, which acts as the Proton acceptor; specific for D-alanine. K34 carries the post-translational modification N6-(pyridoxal phosphate)lysine. R129 lines the substrate pocket. The active-site Proton acceptor; specific for L-alanine is the Y254. M302 is a substrate binding site.

It belongs to the alanine racemase family. It depends on pyridoxal 5'-phosphate as a cofactor.

The catalysed reaction is L-alanine = D-alanine. Its pathway is amino-acid biosynthesis; D-alanine biosynthesis; D-alanine from L-alanine: step 1/1. Its function is as follows. Catalyzes the interconversion of L-alanine and D-alanine. May also act on other amino acids. The polypeptide is Alanine racemase (alr) (Vibrio parahaemolyticus serotype O3:K6 (strain RIMD 2210633)).